The primary structure comprises 207 residues: Guanylate kinase (207 aa).

A Guanylate kinase-like domain is found at 4 to 184; sequence GTLYIVSAPS…ALADLHTIIR (181 aa). An ATP-binding site is contributed by 11 to 18; it reads APSGAGKS.

Belongs to the guanylate kinase family.

Its subcellular location is the cytoplasm. The catalysed reaction is GMP + ATP = GDP + ADP. In terms of biological role, essential for recycling GMP and indirectly, cGMP. The polypeptide is Guanylate kinase (Photorhabdus laumondii subsp. laumondii (strain DSM 15139 / CIP 105565 / TT01) (Photorhabdus luminescens subsp. laumondii)).